We begin with the raw amino-acid sequence, 606 residues long: UvrABC system protein C (606 aa).

Residues 14 to 93 (QNPGVYLMKD…IKKHSPRYNV (80 aa)) enclose the GIY-YIG domain. The region spanning 203 to 238 (PDLINRLKFEMQTEADLEHFERAAQIRDTILAIQTT) is the UVR domain.

The protein belongs to the UvrC family. In terms of assembly, interacts with UvrB in an incision complex.

It is found in the cytoplasm. Its function is as follows. The UvrABC repair system catalyzes the recognition and processing of DNA lesions. UvrC both incises the 5' and 3' sides of the lesion. The N-terminal half is responsible for the 3' incision and the C-terminal half is responsible for the 5' incision. This is UvrABC system protein C from Desulforapulum autotrophicum (strain ATCC 43914 / DSM 3382 / VKM B-1955 / HRM2) (Desulfobacterium autotrophicum).